The sequence spans 325 residues: Glutarate 2-hydroxylase (325 aa).

The Fe cation site is built by H160, D162, and H292.

It belongs to the glutarate hydroxylase family. As to quaternary structure, homotetramer. It depends on Fe(2+) as a cofactor.

The enzyme catalyses glutarate + 2-oxoglutarate + O2 = (S)-2-hydroxyglutarate + succinate + CO2. Its pathway is amino-acid degradation. In terms of biological role, acts as an alpha-ketoglutarate-dependent dioxygenase catalyzing hydroxylation of glutarate (GA) to L-2-hydroxyglutarate (L2HG). Functions in a L-lysine degradation pathway that proceeds via cadaverine, glutarate and L-2-hydroxyglutarate. The protein is Glutarate 2-hydroxylase of Escherichia coli O157:H7.